The sequence spans 445 residues: MSNTILQQLPKGQKVGIAFSGGLDTSAALLWMRQKGAVPYAYTANLGQPDEEDYNAIPRKAMEYGAENARLIDCRAQLAHEGIAAIQSGAFHISTGGVTYFNTTPLGRAVTGTMLVSAMREDDVNIWGDGSTFKGNDIERFYRYGLLTNPNLKIYKPWLDNQFIEELGGRHEMSEFLIANGFEYKMSVEKAYSTDSNMLGATHEAKDLEFLNTGIRIVKPIMGVAFWRDDVEVKAEEVTVRFEEGIPVALNGKTFSDHVELFLEANRIGGRHGLGMSDQIENRIIEAKSRGIYEAPGMALLHIAYERLVSGIHNEDTIEQYRINGLRLGRLLYQGRWFDPQALMLRETAQRWVARAITGEVTFELRRGNDYSILNTESPNLTYMPERLSMEKVENAPFDPVDRIGQLTMRNLDIVDTRDKLGIYTQTGLLSISKDSFLPQLNKKG.

Residues 18–26 and alanine 44 each bind ATP; that span reads AFSGGLDTS. Tyrosine 100 is an L-citrulline binding site. ATP-binding residues include glycine 130 and threonine 132. Residues threonine 132, asparagine 136, and aspartate 137 each contribute to the L-aspartate site. Residue asparagine 136 participates in L-citrulline binding. Aspartate 137 contributes to the ATP binding site. The L-citrulline site is built by arginine 140 and serine 193. ATP is bound at residue aspartate 195. 3 residues coordinate L-citrulline: threonine 202, glutamate 204, and glutamate 281.

The protein belongs to the argininosuccinate synthase family. Type 2 subfamily. In terms of assembly, homotetramer.

It localises to the cytoplasm. The catalysed reaction is L-citrulline + L-aspartate + ATP = 2-(N(omega)-L-arginino)succinate + AMP + diphosphate + H(+). It participates in amino-acid biosynthesis; L-arginine biosynthesis; L-arginine from L-ornithine and carbamoyl phosphate: step 2/3. In Pasteurella multocida (strain Pm70), this protein is Argininosuccinate synthase (argG).